The chain runs to 135 residues: Small ribosomal subunit protein uS12 (135 aa).

The interval Met-1 to Lys-20 is disordered. Over residues Arg-9–Lys-18 the composition is skewed to basic residues. Asp-102 is subject to 3-methylthioaspartic acid.

Belongs to the universal ribosomal protein uS12 family. Part of the 30S ribosomal subunit. Contacts proteins S8 and S17. May interact with IF1 in the 30S initiation complex.

Its function is as follows. With S4 and S5 plays an important role in translational accuracy. In terms of biological role, interacts with and stabilizes bases of the 16S rRNA that are involved in tRNA selection in the A site and with the mRNA backbone. Located at the interface of the 30S and 50S subunits, it traverses the body of the 30S subunit contacting proteins on the other side and probably holding the rRNA structure together. The combined cluster of proteins S8, S12 and S17 appears to hold together the shoulder and platform of the 30S subunit. The protein is Small ribosomal subunit protein uS12 of Lactobacillus helveticus (strain DPC 4571).